The primary structure comprises 361 residues: Allatostatin-A receptor (361 aa).

Over 1-46 (MESTEDEFYTICLNLTAEDPSFGNCNYTTDFENGELLEKVVSRVVP) the chain is Extracellular. N-linked (GlcNAc...) asparagine glycosylation is found at Asn14 and Asn26. Residues 47-67 (IFFGFIGIVGLVGNALVVLVV) traverse the membrane as a helical segment. The Cytoplasmic segment spans residues 68 to 78 (AANPGMRSTTN). Residues 79-99 (LLIINLAVADLLFVIFCVPFT) traverse the membrane as a helical segment. Topologically, residues 100-116 (ATDYVMPRWPFGDWWCK) are extracellular. A disulfide bond links Cys115 and Cys196. A helical transmembrane segment spans residues 117 to 137 (VVQYFIVVTAHASVYTLVLMS). At 138 to 158 (LDRFMAVVHPIASMSIRTEKN) the chain is on the cytoplasmic side. Residues 159 to 179 (ALLAIACIWVVILTTAIPVGI) traverse the membrane as a helical segment. Over 180–212 (CHGEREYSYFNRNHSSCVFLEERGYSKLGFQMS) the chain is Extracellular. The N-linked (GlcNAc...) asparagine glycan is linked to Asn192. A helical transmembrane segment spans residues 213–233 (FFLSSYVIPLALISVLYMCML). The Cytoplasmic segment spans residues 234 to 259 (TRLWKSAPGGRVSAESRRGRKKVTRM). A helical membrane pass occupies residues 260 to 280 (VVVVVVVFAVCWCPIQIILLV). Over 281–296 (KALNKYHITYFTVTAQ) the chain is Extracellular. A helical membrane pass occupies residues 297-317 (IVSHVLAYMNSCVNPVLYAFL). Over 318 to 361 (SENFRVAFRKVMYCPPPYNDGFSGRPQATKTTRTGNGNSCHDIV) the chain is Cytoplasmic. The segment at 341 to 361 (GRPQATKTTRTGNGNSCHDIV) is disordered. Residues 343 to 361 (PQATKTTRTGNGNSCHDIV) are compositionally biased toward polar residues.

It belongs to the G-protein coupled receptor 1 family. Expressed in the midgut and, to a lesser extent, in the fore- and hindgut of fifth instar larvae. Also highly expressed in the brain of fourth and fifth instar larvae.

The protein resides in the cell membrane. In terms of biological role, acts as a receptor for A-type allatostatin neuropeptide hormones. This is Allatostatin-A receptor from Bombyx mori (Silk moth).